Consider the following 160-residue polypeptide: Cyclic pyranopterin monophosphate synthase (160 aa).

Substrate-binding positions include 77–79 and 115–116; these read LCH and ME. Residue Asp130 is part of the active site.

This sequence belongs to the MoaC family. As to quaternary structure, homohexamer; trimer of dimers.

The catalysed reaction is (8S)-3',8-cyclo-7,8-dihydroguanosine 5'-triphosphate = cyclic pyranopterin phosphate + diphosphate. Its pathway is cofactor biosynthesis; molybdopterin biosynthesis. Functionally, catalyzes the conversion of (8S)-3',8-cyclo-7,8-dihydroguanosine 5'-triphosphate to cyclic pyranopterin monophosphate (cPMP). The polypeptide is Cyclic pyranopterin monophosphate synthase (Parvibaculum lavamentivorans (strain DS-1 / DSM 13023 / NCIMB 13966)).